We begin with the raw amino-acid sequence, 346 residues long: 3-dehydroquinate synthase (346 aa).

Residues 61–66, 95–99, 119–120, Lys-132, and Lys-141 each bind NAD(+); these read DGEAYK, GVIGD, and TT. Glu-174, His-233, and His-250 together coordinate Zn(2+).

The protein belongs to the sugar phosphate cyclases superfamily. Dehydroquinate synthase family. It depends on NAD(+) as a cofactor. Requires Co(2+) as cofactor. Zn(2+) is required as a cofactor.

It is found in the cytoplasm. The catalysed reaction is 7-phospho-2-dehydro-3-deoxy-D-arabino-heptonate = 3-dehydroquinate + phosphate. It functions in the pathway metabolic intermediate biosynthesis; chorismate biosynthesis; chorismate from D-erythrose 4-phosphate and phosphoenolpyruvate: step 2/7. Functionally, catalyzes the conversion of 3-deoxy-D-arabino-heptulosonate 7-phosphate (DAHP) to dehydroquinate (DHQ). The protein is 3-dehydroquinate synthase of Wolinella succinogenes (strain ATCC 29543 / DSM 1740 / CCUG 13145 / JCM 31913 / LMG 7466 / NCTC 11488 / FDC 602W) (Vibrio succinogenes).